A 129-amino-acid chain; its full sequence is Lysozyme C (129 aa).

The C-type lysozyme domain occupies 1–129; the sequence is KVYGRCELAA…VHAWIRGCRL (129 aa). Disulfide bonds link C6–C127, C30–C115, C64–C80, and C76–C94. Catalysis depends on residues E35 and D52.

This sequence belongs to the glycosyl hydrolase 22 family. As to quaternary structure, monomer.

It localises to the secreted. The enzyme catalyses Hydrolysis of (1-&gt;4)-beta-linkages between N-acetylmuramic acid and N-acetyl-D-glucosamine residues in a peptidoglycan and between N-acetyl-D-glucosamine residues in chitodextrins.. In terms of biological role, lysozymes have primarily a bacteriolytic function; those in tissues and body fluids are associated with the monocyte-macrophage system and enhance the activity of immunoagents. This chain is Lysozyme C (LYZ), found in Lophophorus impejanus (Himalayan monal pheasant).